The primary structure comprises 534 residues: NEDD8-activating enzyme E1 regulatory subunit (534 aa).

Ala-2 carries the N-acetylalanine modification. N6-acetyllysine occurs at positions 6 and 341. An interaction with UBA3 region spans residues 331 to 344 (DMIADSNKYIKLQN).

Belongs to the ubiquitin-activating E1 family. ULA1 subfamily. In terms of assembly, heterodimer of UBA3 and NAE1. The complex binds NEDD8 and UBE2M. Binds APP and TP53BP2. Ubiquitinated by TRIP12, leading to its degradation by the proteasome. In terms of tissue distribution, expressed throughout the brain. In hippocampus, strongly expressed in granule cells and in the pyramidal cell layer. Strongly expressed in the piriform cortex. In the cerebellum, expressed only in Purkinje cells.

It localises to the cell membrane. Its pathway is protein modification; protein neddylation. Its activity is regulated as follows. Binding of TP53BP2 to the regulatory subunit NAE1 decreases neddylation activity. Functionally, regulatory subunit of the dimeric UBA3-NAE1 E1 enzyme. E1 activates NEDD8 by first adenylating its C-terminal glycine residue with ATP, thereafter linking this residue to the side chain of the catalytic cysteine, yielding a NEDD8-UBA3 thioester and free AMP. E1 finally transfers NEDD8 to the catalytic cysteine of UBE2M. Necessary for cell cycle progression through the S-M checkpoint. Overexpression of NAE1 causes apoptosis through deregulation of NEDD8 conjugation. The covalent attachment of NEDD8 to target proteins is known as 'neddylation' and the process is involved in the regulation of cell growth, viability and development. In Rattus norvegicus (Rat), this protein is NEDD8-activating enzyme E1 regulatory subunit (Nae1).